Reading from the N-terminus, the 861-residue chain is Leucine--tRNA ligase (861 aa).

The 'HIGH' region signature appears at 42 to 52 (PYPSGKLHMGH). Positions 619–623 (KMSKS) match the 'KMSKS' region motif. Lysine 622 provides a ligand contact to ATP.

The protein belongs to the class-I aminoacyl-tRNA synthetase family.

The protein resides in the cytoplasm. It carries out the reaction tRNA(Leu) + L-leucine + ATP = L-leucyl-tRNA(Leu) + AMP + diphosphate. The protein is Leucine--tRNA ligase of Actinobacillus pleuropneumoniae serotype 5b (strain L20).